A 255-amino-acid polypeptide reads, in one-letter code: tRNA (guanine-N(7)-)-methyltransferase (255 aa).

Residues 1-29 are disordered; it reads MSDSDASRPSAIASDGPDAAGKHASGAPW. S-adenosyl-L-methionine-binding residues include Glu-86, Glu-111, Asp-138, and Asp-160. Residue Asp-160 is part of the active site. Substrate contacts are provided by residues Lys-164, Asp-196, and 233–236; that span reads TRYE.

It belongs to the class I-like SAM-binding methyltransferase superfamily. TrmB family.

The enzyme catalyses guanosine(46) in tRNA + S-adenosyl-L-methionine = N(7)-methylguanosine(46) in tRNA + S-adenosyl-L-homocysteine. The protein operates within tRNA modification; N(7)-methylguanine-tRNA biosynthesis. In terms of biological role, catalyzes the formation of N(7)-methylguanine at position 46 (m7G46) in tRNA. This chain is tRNA (guanine-N(7)-)-methyltransferase, found in Ruegeria sp. (strain TM1040) (Silicibacter sp.).